A 98-amino-acid chain; its full sequence is uncharacterized protein (98 aa).

Belongs to the HesB/IscA family.

This is an uncharacterized protein from Staphylococcus aureus (strain USA300).